The chain runs to 307 residues: Urease accessory protein UreD (307 aa).

This sequence belongs to the UreD family. As to quaternary structure, ureD, UreF and UreG form a complex that acts as a GTP-hydrolysis-dependent molecular chaperone, activating the urease apoprotein by helping to assemble the nickel containing metallocenter of UreC. The UreE protein probably delivers the nickel.

It is found in the cytoplasm. Functionally, required for maturation of urease via the functional incorporation of the urease nickel metallocenter. The protein is Urease accessory protein UreD of Prochlorococcus marinus (strain NATL1A).